The sequence spans 453 residues: MSDLKPMEIVRELDRYIIGQKNAKKSVAIALRNRWRRRQVPDDLRDEIAPKNIILIGPTGVGKTEIARRLARLTDSPFYKVEASKFTEVGYVGRDVESMIRDLMELTVNTLKVRQQEEVQEKAAAMAEERILDLLLPESGGPEGATLTEPHLEVVSSSSSKSSTREKLRKMLNNGKLDSRFVDIDVTGKASPMIEIFSNTGMEEMGINMKDMLGNLLPKNTKRRKVKVAEAMKILTQDEAAHLVDMEKVTADAVEMVEQSGIIFLDEIDKIAGKGNSQGPEVSKEGVQRDLLPIVEGSSVPTKYGTVKTDHILFIASGAFHIAKPSDLIPELQGRFPIRVELTSLGKDEFVRILTEPKNALILQYIALLRTEGVELEFTEDAIDKIASIAVDVNERTENIGARRLHTIMEKLLEEILFHAPDVEEKKMVVDADFVDKQLMEIVKDEDLSRYIL.

ATP contacts are provided by residues Ile-18, 60 to 65 (GVGKTE), Asp-266, Glu-331, and Arg-403.

Belongs to the ClpX chaperone family. HslU subfamily. In terms of assembly, a double ring-shaped homohexamer of HslV is capped on each side by a ring-shaped HslU homohexamer. The assembly of the HslU/HslV complex is dependent on binding of ATP.

It is found in the cytoplasm. ATPase subunit of a proteasome-like degradation complex; this subunit has chaperone activity. The binding of ATP and its subsequent hydrolysis by HslU are essential for unfolding of protein substrates subsequently hydrolyzed by HslV. HslU recognizes the N-terminal part of its protein substrates and unfolds these before they are guided to HslV for hydrolysis. This Desulforapulum autotrophicum (strain ATCC 43914 / DSM 3382 / VKM B-1955 / HRM2) (Desulfobacterium autotrophicum) protein is ATP-dependent protease ATPase subunit HslU.